The following is a 263-amino-acid chain: Chymotrypsinogen B (263 aa).

The N-terminal stretch at 1–18 (MAFLWLVSCFALVGATFG) is a signal peptide. 5 cysteine pairs are disulfide-bonded: Cys-19–Cys-140, Cys-60–Cys-76, Cys-154–Cys-219, Cys-186–Cys-200, and Cys-209–Cys-238. Residues 34–261 (IVNGEDAIPG…LMPWVQEILE (228 aa)) form the Peptidase S1 domain. Residue His-75 is the Charge relay system of the active site. Phosphoserine is present on Ser-93. Catalysis depends on Asp-120, which acts as the Charge relay system. Ser-213 (charge relay system) is an active-site residue.

The protein belongs to the peptidase S1 family.

It localises to the secreted. Its subcellular location is the extracellular space. The catalysed reaction is Preferential cleavage: Tyr-|-Xaa, Trp-|-Xaa, Phe-|-Xaa, Leu-|-Xaa.. This is Chymotrypsinogen B (Ctrb1) from Mus musculus (Mouse).